Here is a 275-residue protein sequence, read N- to C-terminus: Diaminopimelate epimerase (275 aa).

Substrate is bound by residues N13, Q46, and N66. Residue C75 is the Proton donor of the active site. Residues 76-77, N159, N192, and 210-211 contribute to the substrate site; these read GN and ER. C219 serves as the catalytic Proton acceptor. Residue 220-221 coordinates substrate; sequence GS.

The protein belongs to the diaminopimelate epimerase family. In terms of assembly, homodimer.

It is found in the cytoplasm. The enzyme catalyses (2S,6S)-2,6-diaminopimelate = meso-2,6-diaminopimelate. The protein operates within amino-acid biosynthesis; L-lysine biosynthesis via DAP pathway; DL-2,6-diaminopimelate from LL-2,6-diaminopimelate: step 1/1. Its function is as follows. Catalyzes the stereoinversion of LL-2,6-diaminopimelate (L,L-DAP) to meso-diaminopimelate (meso-DAP), a precursor of L-lysine and an essential component of the bacterial peptidoglycan. The chain is Diaminopimelate epimerase from Idiomarina loihiensis (strain ATCC BAA-735 / DSM 15497 / L2-TR).